Reading from the N-terminus, the 722-residue chain is Disintegrin and metalloproteinase domain-containing protein 21 (722 aa).

The signal sequence occupies residues 1–31 (MAVDGTLVYIRVTLLLLWLGVFLSISGYCQA). Residues 32–196 (GPSQHFTSPE…FEEAENSALE (165 aa)) constitute a propeptide that is removed on maturation. Asn164 is a glycosylation site (N-linked (GlcNAc...) asparagine). The Cysteine switch signature appears at 171 to 178 (MRCGLTEK). Cys173 is a binding site for Zn(2+). Over 197–681 (PKSAGDWWTH…DSGPASAKRG (485 aa)) the chain is Extracellular. Residues 208–398 (WFLELVVVVN…NQGSCLHNPP (191 aa)) form the Peptidase M12B domain. N-linked (GlcNAc...) asparagine glycosylation is present at Asn227. 3 disulfide bridges follow: Cys316–Cys393, Cys356–Cys378, and Cys358–Cys363. Residue His341 participates in Zn(2+) binding. Glu342 is a catalytic residue. Positions 345 and 351 each coordinate Zn(2+). Asn377, Asn437, Asn478, Asn546, and Asn600 each carry an N-linked (GlcNAc...) asparagine glycan. The region spanning 406–492 (LKRCGNGVVE…QCPEDRYVQD (87 aa)) is the Disintegrin domain. The cysteines at positions 464 and 484 are disulfide-linked. 3 disulfide bridges follow: Cys634-Cys645, Cys639-Cys651, and Cys653-Cys662. The EGF-like domain maps to 634–663 (CLPETCNMKGICNNKHHCHCGYGWSPPYCQ). A helical membrane pass occupies residues 682 to 702 (VFLPLIVIPSLSVLTFLFTVG). The Cytoplasmic segment spans residues 703 to 722 (LLMYLRQCSGPKETKAHSSG).

It depends on Zn(2+) as a cofactor. Has no obvious cleavage site for furin endopeptidase, suggesting that the proteolytic processing is regulated.

Its subcellular location is the membrane. In terms of biological role, may be involved in sperm maturation and/or fertilization. May also be involved in epithelia functions associated with establishing and maintaining gradients of ions or nutrients. The chain is Disintegrin and metalloproteinase domain-containing protein 21 (ADAM21) from Homo sapiens (Human).